A 239-amino-acid polypeptide reads, in one-letter code: 7-cyano-7-deazaguanine synthase (239 aa).

Residue 12-22 (FSGGQDSATCL) participates in ATP binding. Cysteine 200, cysteine 215, cysteine 218, and cysteine 221 together coordinate Zn(2+).

It belongs to the QueC family. It depends on Zn(2+) as a cofactor.

It catalyses the reaction 7-carboxy-7-deazaguanine + NH4(+) + ATP = 7-cyano-7-deazaguanine + ADP + phosphate + H2O + H(+). It functions in the pathway purine metabolism; 7-cyano-7-deazaguanine biosynthesis. Its function is as follows. Catalyzes the ATP-dependent conversion of 7-carboxy-7-deazaguanine (CDG) to 7-cyano-7-deazaguanine (preQ(0)). In Hyphomonas neptunium (strain ATCC 15444), this protein is 7-cyano-7-deazaguanine synthase.